We begin with the raw amino-acid sequence, 93 residues long: Large ribosomal subunit protein uL23cz/uL23cy (93 aa).

The protein belongs to the universal ribosomal protein uL23 family. Part of the 50S ribosomal subunit.

The protein resides in the plastid. Its subcellular location is the chloroplast. Binds to 23S rRNA. This Populus alba (White poplar) protein is Large ribosomal subunit protein uL23cz/uL23cy (rpl23-A).